The primary structure comprises 101 residues: RNA-binding protein Hfq (101 aa).

Residues 9–68 (DPYLNALRRERIPVSIYLVNGIKLQGQIESFDQFIILLKNTVSQMVYKHAISTVVPARSI) enclose the Sm domain. Positions 68–91 (ISHNNNGSSQAQAPQQAVQTTQPV) are disordered. Low complexity predominate over residues 77 to 91 (QAQAPQQAVQTTQPV).

The protein belongs to the Hfq family. As to quaternary structure, homohexamer.

RNA chaperone that binds small regulatory RNA (sRNAs) and mRNAs to facilitate mRNA translational regulation in response to envelope stress, environmental stress and changes in metabolite concentrations. Also binds with high specificity to tRNAs. In Haemophilus ducreyi (strain 35000HP / ATCC 700724), this protein is RNA-binding protein Hfq.